The sequence spans 444 residues: N-succinylarginine dihydrolase (444 aa).

Residues 19 to 28 (AGLSFGNVAS), Asn-110, and 137 to 138 (HR) contribute to the substrate site. Glu-174 is an active-site residue. Position 214 (Arg-214) interacts with substrate. His-250 is an active-site residue. Substrate is bound by residues Asp-252 and Asn-362. Catalysis depends on Cys-368, which acts as the Nucleophile.

It belongs to the succinylarginine dihydrolase family. As to quaternary structure, homodimer.

The catalysed reaction is N(2)-succinyl-L-arginine + 2 H2O + 2 H(+) = N(2)-succinyl-L-ornithine + 2 NH4(+) + CO2. It participates in amino-acid degradation; L-arginine degradation via AST pathway; L-glutamate and succinate from L-arginine: step 2/5. Catalyzes the hydrolysis of N(2)-succinylarginine into N(2)-succinylornithine, ammonia and CO(2). The polypeptide is N-succinylarginine dihydrolase (Shewanella baltica (strain OS223)).